Here is an 80-residue protein sequence, read N- to C-terminus: Large ribosomal subunit protein eL13 (80 aa).

It belongs to the eukaryotic ribosomal protein eL13 family.

This chain is Large ribosomal subunit protein eL13, found in Aeropyrum pernix (strain ATCC 700893 / DSM 11879 / JCM 9820 / NBRC 100138 / K1).